The chain runs to 1374 residues: MMQGNTCHRMSFHPGRGCPRGRGGHGARPSAPSFRPQNLRLLHPQQPPVQYQYEPPSAPSTTFSNSPAPNFLPPRPDFVPFPPPMPPSAQGPLPPCPIRPPFPNHQMRHPFPVPPCFPPMPPPMPCPNNPPVPGAPPGQGTFPFMMPPPSMPHPPPPPVMPQQVNYQYPPGYSHHNFPPPSFNSFQNNPSSFLPSANNSSSPHFRHLPPYPLPKAPSERRSPERLKHYDDHRHRDHSHGRGERHRSLDRRERGRSPDRRRQDSRYRSDYDRGRTPSRHRSYERSRERERERHRHRDNRRSPSLERSYKKEYKRSGRSYGLSVVPEPAGCTPELPGEIIKNTDSWAPPLEIVNHRSPSREKKRARWEEEKDRWSDNQSSGKDKNYTSIKEKEPEETMPDKNEEEEEELLKPVWIRCTHSENYYSSDPMDQVGDSTVVGTSRLRDLYDKFEEELGSRQEKAKAARPPWEPPKTKLDEDLESSSESECESDEDSTCSSSSDSEVFDVIAEIKRKKAHPDRLHDELWYNDPGQMNDGPLCKCSAKARRTGIRHSIYPGEEAIKPCRPMTNNAGRLFHYRITVSPPTNFLTDRPTVIEYDDHEYIFEGFSMFAHAPLTNIPLCKVIRFNIDYTIHFIEEMMPENFCVKGLELFSLFLFRDILELYDWNLKGPLFEDSPPCCPRFHFMPRFVRFLPDGGKEVLSMHQILLYLLRCSKALVPEEEIANMLQWEELEWQKYAEECKGMIVTNPGTKPSSVRIDQLDREQFNPDVITFPIIVHFGIRPAQLSYAGDPQYQKLWKSYVKLRHLLANSPKVKQTDKQKLAQREEALQKIRQKNTMRREVTVELSSQGFWKTGIRSDVCQHAMMLPVLTHHIRYHQCLMHLDKLIGYTFQDRCLLQLAMTHPSHHLNFGMNPDHARNSLSNCGIRQPKYGDRKVHHMHMRKKGINTLINIMSRLGQDDPTPSRINHNERLEFLGDAVVEFLTSVHLYYLFPSLEEGGLATYRTAIVQNQHLAMLAKKLELDRFMLYAHGPDLCRESDLRHAMANCFEALIGAVYLEGSLEEAKQLFGRLLFNDPDLREVWLNYPLHPLQLQEPNTDRQLIETSPVLQKLTEFEEAIGVIFTHVRLLARAFTLRTVGFNHLTLGHNQRMEFLGDSIMQLVATEYLFIHFPDHHEGHLTLLRSSLVNNRTQAKVAEELGMQEYAITNDKTKRPVALRTKTLADLLESFIAALYIDKDLEYVHTFMNVCFFPRLKEFILNQDWNDPKSQLQQCCLTLRTEGKEPDIPLYKTLQTVGPSHARTYTVAVYFKGERIGCGKGPSIQQAEMGAAMDALEKYNFPQMAHQKRFIERKYRQELKEMRWEREHQEREPDETEDIKK.

Disordered regions lie at residues 1-95, 130-406, and 452-497; these read MMQG…PLPP, PPVP…EEEE, and LGSR…SSSS. Residues 59–68 are compositionally biased toward polar residues; the sequence is PSTTFSNSPA. Pro residues-rich tracts occupy residues 70–95 and 145–160; these read NFLPPRPDFVPFPPPMPPSAQGPLPP and MMPPPSMPHPPPPPVM. Residues 182–202 show a composition bias toward low complexity; that stretch reads FNSFQNNPSSFLPSANNSSSP. Basic and acidic residues-rich tracts occupy residues 216-289 and 298-313; these read PSER…ERER and RRSPSLERSYKKEYKR. 2 positions are modified to phosphoserine: S355 and S373. Residues 364 to 399 show a composition bias toward basic and acidic residues; sequence RWEEEKDRWSDNQSSGKDKNYTSIKEKEPEETMPDK. Residues 390–1365 form a necessary for interaction with DGCR8 and pri-miRNA processing activity region; sequence KEPEETMPDK…RWEREHQERE (976 aa). The segment covering 475–491 has biased composition (acidic residues); the sequence is EDLESSSESECESDEDS. Zn(2+) is bound by residues C536, C538, H549, C561, H609, C676, and H680. RNase III domains follow at residues 876–1056 and 1107–1233; these read LMHL…LEGS and LTEF…IDKD. E969 serves as a coordination point for Mg(2+). Residue H1026 participates in Zn(2+) binding. Mg(2+) contacts are provided by N1042, E1045, E1147, D1219, and E1222. Positions 1260-1334 constitute a DRBM domain; it reads DPKSQLQQCC…AMDALEKYNF (75 aa).

This sequence belongs to the ribonuclease III family. As to quaternary structure, component of the microprocessor complex, or pri-miRNA processing protein complex, which is composed of DROSHA and DGCR8. The microprocessor complex is a heterotrimer; each of the two DROSHA RNase III domains binds one DGCR8 (via C-terminal region). Interacts with SP1 and SNIP1. Interacts with SRRT/ARS2. Interacts with CPSF3 and ISY1; this interaction is in an RNA dependent manner. Interacts with PUS10; interaction promotes pri-miRNAs processing. Mg(2+) serves as cofactor. Requires Mn(2+) as cofactor. Post-translationally, degraded by autophagy in response to neuronal activity in motor neurons. In terms of tissue distribution, ubiquitous.

The protein resides in the nucleus. The protein localises to the nucleolus. Its subcellular location is the cytoplasm. It carries out the reaction Endonucleolytic cleavage to 5'-phosphomonoester.. Functionally, ribonuclease III double-stranded (ds) RNA-specific endoribonuclease that is involved in the initial step of microRNA (miRNA) biogenesis. Component of the microprocessor complex that is required to process primary miRNA transcripts (pri-miRNAs) to release precursor miRNA (pre-miRNA) in the nucleus. Within the microprocessor complex, DROSHA cleaves the 3' and 5' strands of a stem-loop in pri-miRNAs (processing center 11 bp from the dsRNA-ssRNA junction) to release hairpin-shaped pre-miRNAs that are subsequently cut by the cytoplasmic DICER to generate mature miRNAs. Involved also in pre-rRNA processing. Cleaves double-strand RNA and does not cleave single-strand RNA. Involved in the formation of GW bodies. Plays a role in growth homeostasis in response to autophagy in motor neurons. The chain is Ribonuclease 3 (DROSHA) from Homo sapiens (Human).